We begin with the raw amino-acid sequence, 292 residues long: 4-hydroxy-tetrahydrodipicolinate synthase (292 aa).

Threonine 45 provides a ligand contact to pyruvate. Tyrosine 133 functions as the Proton donor/acceptor in the catalytic mechanism. The Schiff-base intermediate with substrate role is filled by lysine 161. A pyruvate-binding site is contributed by isoleucine 203.

It belongs to the DapA family. Homotetramer; dimer of dimers.

Its subcellular location is the cytoplasm. The catalysed reaction is L-aspartate 4-semialdehyde + pyruvate = (2S,4S)-4-hydroxy-2,3,4,5-tetrahydrodipicolinate + H2O + H(+). Its pathway is amino-acid biosynthesis; L-lysine biosynthesis via DAP pathway; (S)-tetrahydrodipicolinate from L-aspartate: step 3/4. Functionally, catalyzes the condensation of (S)-aspartate-beta-semialdehyde [(S)-ASA] and pyruvate to 4-hydroxy-tetrahydrodipicolinate (HTPA). This is 4-hydroxy-tetrahydrodipicolinate synthase from Vibrio vulnificus (strain CMCP6).